A 328-amino-acid polypeptide reads, in one-letter code: Porphobilinogen deaminase (328 aa).

Position 245 is an S-(dipyrrolylmethanemethyl)cysteine (C245).

The protein belongs to the HMBS family. As to quaternary structure, monomer. Dipyrromethane serves as cofactor.

The enzyme catalyses 4 porphobilinogen + H2O = hydroxymethylbilane + 4 NH4(+). It functions in the pathway porphyrin-containing compound metabolism; protoporphyrin-IX biosynthesis; coproporphyrinogen-III from 5-aminolevulinate: step 2/4. It participates in porphyrin-containing compound metabolism; chlorophyll biosynthesis. Functionally, tetrapolymerization of the monopyrrole PBG into the hydroxymethylbilane pre-uroporphyrinogen in several discrete steps. The chain is Porphobilinogen deaminase from Gloeobacter violaceus (strain ATCC 29082 / PCC 7421).